The chain runs to 157 residues: NAD(P)H-quinone oxidoreductase subunit N (157 aa).

This sequence belongs to the complex I NdhN subunit family. In terms of assembly, NDH-1 can be composed of about 15 different subunits; different subcomplexes with different compositions have been identified which probably have different functions.

It is found in the cellular thylakoid membrane. It carries out the reaction a plastoquinone + NADH + (n+1) H(+)(in) = a plastoquinol + NAD(+) + n H(+)(out). The catalysed reaction is a plastoquinone + NADPH + (n+1) H(+)(in) = a plastoquinol + NADP(+) + n H(+)(out). Functionally, NDH-1 shuttles electrons from an unknown electron donor, via FMN and iron-sulfur (Fe-S) centers, to quinones in the respiratory and/or the photosynthetic chain. The immediate electron acceptor for the enzyme in this species is believed to be plastoquinone. Couples the redox reaction to proton translocation, and thus conserves the redox energy in a proton gradient. Cyanobacterial NDH-1 also plays a role in inorganic carbon-concentration. In Synechococcus sp. (strain CC9902), this protein is NAD(P)H-quinone oxidoreductase subunit N.